The primary structure comprises 167 residues: Cytochrome c-type biogenesis protein CcmE (167 aa).

Residues 1 to 7 (MTRKQRR) lie on the Cytoplasmic side of the membrane. Residues 8-28 (LLMIGGAGVVLIVAVGLVLNA) form a helical; Signal-anchor for type II membrane protein membrane-spanning segment. Residues 29–167 (LRDSIVFFST…TSANAAEGGK (139 aa)) lie on the Periplasmic side of the membrane. 2 residues coordinate heme: H122 and Y126. The segment covering 137–150 (KDGHWKDDYGKKSP) has biased composition (basic and acidic residues). The tract at residues 137-167 (KDGHWKDDYGKKSPGETTAGQTSANAAEGGK) is disordered. Residues 151-161 (GETTAGQTSAN) are compositionally biased toward polar residues.

Belongs to the CcmE/CycJ family.

The protein localises to the cell inner membrane. Its function is as follows. Heme chaperone required for the biogenesis of c-type cytochromes. Transiently binds heme delivered by CcmC and transfers the heme to apo-cytochromes in a process facilitated by CcmF and CcmH. The polypeptide is Cytochrome c-type biogenesis protein CcmE (Rhodopseudomonas palustris (strain ATCC BAA-98 / CGA009)).